Here is a 259-residue protein sequence, read N- to C-terminus: MSHEHVNFPVYGQVDYFKQQQPQQPQYNPHLGGKQKTLDPIVTGTSVIAIKYDKGVVMGSDMLLSYGSLARFNSTERMKKFGGYTIVGASGEYSDFQSITNTLNDLVTDDHCMDDGSKLSSEEIWNYLARVLYNQRNRGNPLWNTLVVMGYQGGKSFLGKVDLVGTCYKDDIITTGYGSHIALPLLRKARDENPNMNLEQAKQLIQDCLRVLFYRDARSSKKIQISVAGEEGIEISGPIELDTFHWNSGEAAVKNFSQV.

Belongs to the peptidase T1B family. As to quaternary structure, the 26S proteasome consists of a 20S proteasome core and two 19S regulatory subunits. The 20S proteasome core is composed of 28 subunits that are arranged in four stacked rings, resulting in a barrel-shaped structure. The two end rings are each formed by seven alpha subunits, and the two central rings are each formed by seven beta subunits. The catalytic chamber with the active sites is on the inside of the barrel.

The protein resides in the cytoplasm. Its subcellular location is the nucleus. Its function is as follows. Non-catalytic component of the proteasome, a multicatalytic proteinase complex which is characterized by its ability to cleave peptides with Arg, Phe, Tyr, Leu, and Glu adjacent to the leaving group at neutral or slightly basic pH. The proteasome has an ATP-dependent proteolytic activity. The polypeptide is Proteasome subunit beta type-4 (psmB4-1) (Dictyostelium discoideum (Social amoeba)).